We begin with the raw amino-acid sequence, 94 residues long: CRISPR-associated endoribonuclease Cas2 (94 aa).

Asp11 is a binding site for Mg(2+).

Belongs to the CRISPR-associated endoribonuclease Cas2 protein family. As to quaternary structure, homodimer, forms a heterotetramer with a Cas1 homodimer. The cofactor is Mg(2+).

In terms of biological role, CRISPR (clustered regularly interspaced short palindromic repeat), is an adaptive immune system that provides protection against mobile genetic elements (viruses, transposable elements and conjugative plasmids). CRISPR clusters contain sequences complementary to antecedent mobile elements and target invading nucleic acids. CRISPR clusters are transcribed and processed into CRISPR RNA (crRNA). Functions as a ssRNA-specific endoribonuclease. Involved in the integration of spacer DNA into the CRISPR cassette. This Allochromatium vinosum (strain ATCC 17899 / DSM 180 / NBRC 103801 / NCIMB 10441 / D) (Chromatium vinosum) protein is CRISPR-associated endoribonuclease Cas2.